The chain runs to 363 residues: Chorismate synthase (363 aa).

NADP(+) is bound by residues Arg48 and Arg54. FMN is bound by residues 125–127 (RSS), 238–239 (NA), Gly278, 293–297 (KPTSS), and Arg319.

This sequence belongs to the chorismate synthase family. In terms of assembly, homotetramer. FMNH2 is required as a cofactor.

The catalysed reaction is 5-O-(1-carboxyvinyl)-3-phosphoshikimate = chorismate + phosphate. Its pathway is metabolic intermediate biosynthesis; chorismate biosynthesis; chorismate from D-erythrose 4-phosphate and phosphoenolpyruvate: step 7/7. In terms of biological role, catalyzes the anti-1,4-elimination of the C-3 phosphate and the C-6 proR hydrogen from 5-enolpyruvylshikimate-3-phosphate (EPSP) to yield chorismate, which is the branch point compound that serves as the starting substrate for the three terminal pathways of aromatic amino acid biosynthesis. This reaction introduces a second double bond into the aromatic ring system. The sequence is that of Chorismate synthase from Acidithiobacillus ferrooxidans (strain ATCC 23270 / DSM 14882 / CIP 104768 / NCIMB 8455) (Ferrobacillus ferrooxidans (strain ATCC 23270)).